The sequence spans 168 residues: Large ribosomal subunit protein uL11 (168 aa).

This sequence belongs to the universal ribosomal protein uL11 family. In terms of assembly, part of the ribosomal stalk of the 50S ribosomal subunit. Interacts with L10 and the large rRNA to form the base of the stalk. L10 forms an elongated spine to which L12 dimers bind in a sequential fashion forming a multimeric L10(L12)X complex.

Functionally, forms part of the ribosomal stalk which helps the ribosome interact with GTP-bound translation factors. This is Large ribosomal subunit protein uL11 from Metallosphaera sedula (strain ATCC 51363 / DSM 5348 / JCM 9185 / NBRC 15509 / TH2).